Consider the following 215-residue polypeptide: Pyrrolidone-carboxylate peptidase (215 aa).

Catalysis depends on residues Glu80, Cys143, and His167.

The protein belongs to the peptidase C15 family. In terms of assembly, homotetramer.

Its subcellular location is the cytoplasm. It catalyses the reaction Release of an N-terminal pyroglutamyl group from a polypeptide, the second amino acid generally not being Pro.. In terms of biological role, removes 5-oxoproline from various penultimate amino acid residues except L-proline. This chain is Pyrrolidone-carboxylate peptidase, found in Yersinia pestis bv. Antiqua (strain Antiqua).